Reading from the N-terminus, the 129-residue chain is Glycine cleavage system H protein 2 (129 aa).

The 82-residue stretch at 24-105 (SVTVGISDHA…PYVSWFFKLK (82 aa)) folds into the Lipoyl-binding domain. At Lys-65 the chain carries N6-lipoyllysine.

The protein belongs to the GcvH family. The glycine cleavage system is composed of four proteins: P, T, L and H. (R)-lipoate serves as cofactor.

The glycine cleavage system catalyzes the degradation of glycine. The H protein shuttles the methylamine group of glycine from the P protein to the T protein. This Pseudomonas aeruginosa (strain ATCC 15692 / DSM 22644 / CIP 104116 / JCM 14847 / LMG 12228 / 1C / PRS 101 / PAO1) protein is Glycine cleavage system H protein 2.